Reading from the N-terminus, the 353-residue chain is Deoxyhypusine synthase (353 aa).

Residues 90–94, 116–118, Glu122, and Asp228 contribute to the NAD(+) site; these read SNLIS and TAG. Residue 121 to 122 participates in spermidine binding; sequence EE. Residue Asp233 coordinates spermidine. Gly275 lines the NAD(+) pocket. His280 contacts spermidine. An NAD(+)-binding site is contributed by 300–301; sequence TA. Residues 306-308 and 315-321 each bind spermidine; these read GSD and EAVSWGK. Lys321 (nucleophile) is an active-site residue. 334 to 335 provides a ligand contact to NAD(+); that stretch reads EA.

This sequence belongs to the deoxyhypusine synthase family. In terms of assembly, homotetramer. NAD(+) is required as a cofactor.

The catalysed reaction is [eIF5A protein]-L-lysine + spermidine = [eIF5A protein]-deoxyhypusine + propane-1,3-diamine. Its pathway is protein modification; eIF5A hypusination. Its function is as follows. Catalyzes the NAD-dependent oxidative cleavage of spermidine and the subsequent transfer of the butylamine moiety of spermidine to the epsilon-amino group of a specific lysine residue of the eIF-5A precursor protein to form the intermediate deoxyhypusine residue. This chain is Deoxyhypusine synthase (dys-1), found in Neurospora crassa (strain ATCC 24698 / 74-OR23-1A / CBS 708.71 / DSM 1257 / FGSC 987).